A 175-amino-acid chain; its full sequence is uncharacterized protein (175 aa).

This is an uncharacterized protein from Mycobacterium tuberculosis (strain ATCC 25618 / H37Rv).